The chain runs to 257 residues: Imidazole glycerol phosphate synthase subunit HisF (257 aa).

Residues Asp-11 and Asp-130 contribute to the active site.

Belongs to the HisA/HisF family. In terms of assembly, heterodimer of HisH and HisF.

The protein localises to the cytoplasm. It catalyses the reaction 5-[(5-phospho-1-deoxy-D-ribulos-1-ylimino)methylamino]-1-(5-phospho-beta-D-ribosyl)imidazole-4-carboxamide + L-glutamine = D-erythro-1-(imidazol-4-yl)glycerol 3-phosphate + 5-amino-1-(5-phospho-beta-D-ribosyl)imidazole-4-carboxamide + L-glutamate + H(+). It participates in amino-acid biosynthesis; L-histidine biosynthesis; L-histidine from 5-phospho-alpha-D-ribose 1-diphosphate: step 5/9. Functionally, IGPS catalyzes the conversion of PRFAR and glutamine to IGP, AICAR and glutamate. The HisF subunit catalyzes the cyclization activity that produces IGP and AICAR from PRFAR using the ammonia provided by the HisH subunit. The chain is Imidazole glycerol phosphate synthase subunit HisF from Xylella fastidiosa (strain M23).